Reading from the N-terminus, the 346-residue chain is E3 ubiquitin-protein ligase MARCHF9 (346 aa).

Disordered stretches follow at residues 20-39 and 47-92; these read GGGR…GGCG and STRD…PGAL. Residues 63-75 are compositionally biased toward basic and acidic residues; the sequence is PRARGLAGDKEPR. Pro residues predominate over residues 77–90; sequence GPLPPPAPPLPPPG. An RING-CH-type zinc finger spans residues 102-162; the sequence is DSGLRTPQCR…ELCYFKYQVL (61 aa). Zn(2+) is bound by residues Cys-110, Cys-113, Cys-126, Cys-128, His-136, Cys-139, Cys-152, and Cys-155. The next 2 helical transmembrane spans lie at 185–205 and 219–239; these read IAAI…LIWS and LFQI…GLII. 2 disordered regions span residues 273-301 and 326-346; these read DAGG…RPPA and PPDA…VTTV. The segment covering 284-296 has biased composition (polar residues); sequence PRNSRTGPTSGAT.

Homodimer. In terms of tissue distribution, ubiquitously expressed.

The protein localises to the golgi apparatus membrane. The protein resides in the lysosome membrane. The enzyme catalyses S-ubiquitinyl-[E2 ubiquitin-conjugating enzyme]-L-cysteine + [acceptor protein]-L-lysine = [E2 ubiquitin-conjugating enzyme]-L-cysteine + N(6)-ubiquitinyl-[acceptor protein]-L-lysine.. The protein operates within protein modification; protein ubiquitination. E3 ubiquitin-protein ligase that may mediate ubiquitination of MHC-I, CD4 and ICAM1, and promote their subsequent endocytosis and sorting to lysosomes via multivesicular bodies. E3 ubiquitin ligases accept ubiquitin from an E2 ubiquitin-conjugating enzyme in the form of a thioester and then directly transfer the ubiquitin to targeted substrates. The chain is E3 ubiquitin-protein ligase MARCHF9 from Homo sapiens (Human).